Consider the following 507-residue polypeptide: Keratin, type II cuticular Hb5 (507 aa).

The head stretch occupies residues Met-1–Glu-123. One can recognise an IF rod domain in the interval Glu-123–Leu-434. A coil 1A region spans residues Lys-124–Tyr-158. Residues Gln-159–Leu-168 form a linker 1 region. The segment at Glu-169–Ala-269 is coil 1B. Residue Lys-229 forms a Glycyl lysine isopeptide (Lys-Gly) (interchain with G-Cter in SUMO1) linkage. Positions His-270–Leu-286 are linker 12. The tract at residues Asn-287–Glu-430 is coil 2. The tract at residues Glu-431 to Ala-507 is tail.

The protein belongs to the intermediate filament family. Heterotetramer of two type I and two type II keratins. Synthesis occurs immediately above a small population of matrix cells at the base of the hair bulb and the trichocytes lining the dermal papilla and extends upward through the matrix and ends in the lower part of the cortex of the hair shaft.

This chain is Keratin, type II cuticular Hb5 (KRT85), found in Homo sapiens (Human).